Reading from the N-terminus, the 342-residue chain is Protein-glutamate methylesterase/protein-glutamine glutaminase 1 (342 aa).

The region spanning 2 to 119 (RVAIVNDMPL…GDPKAAAQRL (118 aa)) is the Response regulatory domain. Aspartate 53 carries the 4-aspartylphosphate modification. The CheB-type methylesterase domain maps to 146 to 329 (SDTDAALVVI…LPLGDIAPRL (184 aa)). Active-site residues include serine 158, histidine 185, and aspartate 278.

Belongs to the CheB family. Phosphorylated by CheA. Phosphorylation of the N-terminal regulatory domain activates the methylesterase activity.

Its subcellular location is the cytoplasm. It catalyses the reaction [protein]-L-glutamate 5-O-methyl ester + H2O = L-glutamyl-[protein] + methanol + H(+). The catalysed reaction is L-glutaminyl-[protein] + H2O = L-glutamyl-[protein] + NH4(+). Functionally, involved in chemotaxis. Part of a chemotaxis signal transduction system that modulates chemotaxis in response to various stimuli. Catalyzes the demethylation of specific methylglutamate residues introduced into the chemoreceptors (methyl-accepting chemotaxis proteins or MCP) by CheR. Also mediates the irreversible deamidation of specific glutamine residues to glutamic acid. This is Protein-glutamate methylesterase/protein-glutamine glutaminase 1 from Bordetella avium (strain 197N).